A 288-amino-acid polypeptide reads, in one-letter code: Ankyrin repeat and SOCS box protein 8 (288 aa).

Ser17 carries the post-translational modification Phosphoserine. 4 ANK repeats span residues 52-81, 85-113, 117-146, and 150-179; these read GTLK…EVNA, YNRT…NPNA, NRDT…SVNA, and NNDT…EVRV. The SOCS box domain maps to 235 to 288; sequence QLCEKLTVLCSAPGTLKTLARYTVRRSLGLQYLPDAVKGLPLPASLKEYLLLLE.

Belongs to the ankyrin SOCS box (ASB) family. Interacts with TBK1; this interaction promotes TBK1 proteasomal degradation. Post-translationally, phosphorylated by TBK1.

Its subcellular location is the cytoplasm. It functions in the pathway protein modification; protein ubiquitination. May be a substrate-recognition component of a SCF-like ECS (Elongin-Cullin-SOCS-box protein) E3 ubiquitin-protein ligase complex which mediates the ubiquitination and subsequent proteasomal degradation of target proteins. Inhibits IFN-beta production through the IRF3 signaling pathway by targeting TBK1 via 'Lys-48'-linked ubiquitination, leading to its proteasomal degradation. In Pongo abelii (Sumatran orangutan), this protein is Ankyrin repeat and SOCS box protein 8 (ASB8).